The primary structure comprises 260 residues: Large ribosomal subunit protein eL8A (260 aa).

Residues 1 to 34 are disordered; the sequence is MPSSKKVAPAPLATKSKASTSTKNPLFESTPKNF.

This sequence belongs to the eukaryotic ribosomal protein eL8 family. As to quaternary structure, component of the large ribosomal subunit. Mature ribosomes consist of a small (40S) and a large (60S) subunit. The 40S subunit contains about 32 different proteins and 1 molecule of RNA (18S). The 60S subunit contains 45 different proteins and 3 molecules of RNA (25S, 5.8S and 5S).

It localises to the cytoplasm. Component of the ribosome, a large ribonucleoprotein complex responsible for the synthesis of proteins in the cell. The small ribosomal subunit (SSU) binds messenger RNAs (mRNAs) and translates the encoded message by selecting cognate aminoacyl-transfer RNA (tRNA) molecules. The large subunit (LSU) contains the ribosomal catalytic site termed the peptidyl transferase center (PTC), which catalyzes the formation of peptide bonds, thereby polymerizing the amino acids delivered by tRNAs into a polypeptide chain. The nascent polypeptides leave the ribosome through a tunnel in the LSU and interact with protein factors that function in enzymatic processing, targeting, and the membrane insertion of nascent chains at the exit of the ribosomal tunnel. In Candida albicans (strain SC5314 / ATCC MYA-2876) (Yeast), this protein is Large ribosomal subunit protein eL8A.